A 256-amino-acid polypeptide reads, in one-letter code: Fructose-1,6-bisphosphatase/inositol-1-monophosphatase (256 aa).

Residues glutamate 67, aspartate 83, leucine 85, and aspartate 86 each coordinate Mg(2+). Residues 86–88 (DGS), arginine 170, isoleucine 175, and arginine 194 contribute to the substrate site. A Mg(2+)-binding site is contributed by aspartate 201.

Belongs to the inositol monophosphatase superfamily. FBPase class 4 family. Homodimer. It depends on Mg(2+) as a cofactor.

The enzyme catalyses beta-D-fructose 1,6-bisphosphate + H2O = beta-D-fructose 6-phosphate + phosphate. It catalyses the reaction a myo-inositol phosphate + H2O = myo-inositol + phosphate. In terms of biological role, phosphatase with broad specificity; it can dephosphorylate fructose 1,6-bisphosphate (FBP) and inositol-1-phosphate (IMP). However, while possessing a high FBPase activity in vitro, does not participate in gluconeogenesis in vivo. This Thermococcus kodakarensis (strain ATCC BAA-918 / JCM 12380 / KOD1) (Pyrococcus kodakaraensis (strain KOD1)) protein is Fructose-1,6-bisphosphatase/inositol-1-monophosphatase (suhB).